The chain runs to 231 residues: Killer cell lectin-like receptor subfamily F member 1 (231 aa).

The Cytoplasmic portion of the chain corresponds to 1–38; sequence MQDEERYMTLNVQSKKRSSAQTSQLTFKDYSVTLHWYK. Tyrosine 7 carries the phosphotyrosine modification. A helical; Signal-anchor for type II membrane protein membrane pass occupies residues 39 to 59; it reads ILLGISGTVNGILTLTLISLI. Topologically, residues 60 to 231 are extracellular; it reads LLVSQGVLLK…SSVFKWICQY (172 aa). Asparagine 77, asparagine 91, asparagine 96, and asparagine 176 each carry an N-linked (GlcNAc...) asparagine glycan. A C-type lectin domain is found at 121 to 230; that stretch reads YQGKCYWFSN…CSSVFKWICQ (110 aa). 2 disulfides stabilise this stretch: cysteine 142/cysteine 229 and cysteine 208/cysteine 221.

As to quaternary structure, homodimer. Interacts with CLEC2B. In terms of processing, phosphorylated on Tyr-7; this phosphorylation is required for NKp80/KLRF1-mediated cytotoxicity. Strongly expressed in peripheral blood leukocytes and spleen, with weaker expression in lymph node and adult liver, and no expression detected in bone marrow, thymus, and fetal liver. Not expressed in brain, heart, placenta, lung, kidney, skeletal muscle, and pancreas. Within peripheral blood leukocyte and immunocyte cell lines, expression was predominant in NK cells but was also detected in monocytes.

The protein resides in the membrane. In terms of biological role, functions as an activating receptor involved in immunosurveillance upon binding to various ligands displayed at the surface of myeloid cells. Upon interaction with CLEC2B ligand, stimulates NK-cell cytotoxicity and cytokine production leading to the cytolysis of malignant CLEC2B-expressing myeloid cells. Actviation of the common cytotoxicity pathway involves SRC and SYK kinases. This is Killer cell lectin-like receptor subfamily F member 1 (KLRF1) from Homo sapiens (Human).